Consider the following 455-residue polypeptide: UDP-N-acetylmuramoylalanine--D-glutamate ligase (455 aa).

Residue 119-125 (GTNGKTT) participates in ATP binding.

This sequence belongs to the MurCDEF family.

The protein localises to the cytoplasm. The catalysed reaction is UDP-N-acetyl-alpha-D-muramoyl-L-alanine + D-glutamate + ATP = UDP-N-acetyl-alpha-D-muramoyl-L-alanyl-D-glutamate + ADP + phosphate + H(+). Its pathway is cell wall biogenesis; peptidoglycan biosynthesis. Functionally, cell wall formation. Catalyzes the addition of glutamate to the nucleotide precursor UDP-N-acetylmuramoyl-L-alanine (UMA). The chain is UDP-N-acetylmuramoylalanine--D-glutamate ligase from Listeria monocytogenes serovar 1/2a (strain ATCC BAA-679 / EGD-e).